Reading from the N-terminus, the 425-residue chain is Interferon-activable protein 211 (425 aa).

In terms of domain architecture, Pyrin spans 1–88 (MVNEYKRIVL…AEILKKERSE (88 aa)). Basic and acidic residues predominate over residues 86–99 (RSEVTGETSLEKNG). Residues 86–223 (RSEVTGETSL…QNQNIPRGAV (138 aa)) are disordered. The span at 122-153 (TSATQEETSTAQAGTSTAQAGTSTAQAGTSTA) shows a compositional bias: low complexity. 4 consecutive repeat copies span residues 129 to 135 (TSTAQAG), 136 to 142 (TSTAQAG), 143 to 149 (TSTAQAG), and 150 to 156 (TSTAQKR). The interval 129–177 (TSTAQAGTSTAQAGTSTAQAGTSTAQKRKSMREEETGVKKSKAAKEPDQ) is 4 X 7 AA tandem repeats of T-S-T-A-Q-A-[GR]. The span at 159–176 (MREEETGVKKSKAAKEPD) shows a compositional bias: basic and acidic residues. Residues 190–206 (SPILHSSSSASSNILSA) show a composition bias toward low complexity. Residues 207-218 (KNQKSQPQNQNI) show a composition bias toward polar residues. Residues 213–413 (PQNQNIPRGA…CGDHSFVKVT (201 aa)) form the HIN-200 domain.

Belongs to the HIN-200 family. In terms of assembly, interacts with HOXB2. In terms of tissue distribution, mononuclear phagocytes.

The protein localises to the nucleus. Its function is as follows. Inhibits cell growth via p53/TP53 and RB1-dependent and independent pathways. May work in synergy with TP53 to promote the transcription of CDKN1A/P21. The sequence is that of Interferon-activable protein 211 from Mus musculus (Mouse).